The following is a 175-amino-acid chain: Disulfide bond formation protein B 2 (175 aa).

Residues 1–9 lie on the Cytoplasmic side of the membrane; that stretch reads MYLARTRFL. A helical membrane pass occupies residues 10–26; it reads FFLASLACASIIGTAFY. The Periplasmic portion of the chain corresponds to 27–44; it reads LQQTFGLDPCFLCLIQRA. A disulfide bond links cysteine 36 and cysteine 39. Residues 45–61 form a helical membrane-spanning segment; it reads AIIACGVLALCAACHAP. The Cytoplasmic portion of the chain corresponds to 62–68; the sequence is GPTGMRR. A helical transmembrane segment spans residues 69 to 85; the sequence is YSLGFLLIALTGLVTAG. Over 86 to 142 the chain is Periplasmic; it reads AQVWLQTASADQLIPFITKLEHLLSLLSLDMCIDRLRSDAMFCAEITWTLFGISLPE. Residues 143–161 traverse the membrane as a helical segment; sequence WSLLAFTGLALLPLYPLFS. The Cytoplasmic segment spans residues 162–175; the sequence is EFSHWLATKDRARY.

This sequence belongs to the DsbB family.

It localises to the cell inner membrane. Required for disulfide bond formation in some periplasmic proteins. Acts by oxidizing the DsbA protein. The chain is Disulfide bond formation protein B 2 from Pseudomonas savastanoi pv. phaseolicola (strain 1448A / Race 6) (Pseudomonas syringae pv. phaseolicola (strain 1448A / Race 6)).